The primary structure comprises 243 residues: Small ribosomal subunit protein uS3 (243 aa).

A KH type-2 domain is found at 39–110 (IRTFIEKKYG…QVRINVVEVE (72 aa)). The disordered stretch occupies residues 216 to 243 (QTIPVGANPKRKASRRPQQFEDRSNENS). Positions 233 to 243 (QQFEDRSNENS) are enriched in basic and acidic residues.

The protein belongs to the universal ribosomal protein uS3 family. Part of the 30S ribosomal subunit. Forms a tight complex with proteins S10 and S14.

In terms of biological role, binds the lower part of the 30S subunit head. Binds mRNA in the 70S ribosome, positioning it for translation. The chain is Small ribosomal subunit protein uS3 from Prochlorococcus marinus (strain MIT 9215).